Here is a 322-residue protein sequence, read N- to C-terminus: Ribosomal RNA small subunit methyltransferase H (322 aa).

S-adenosyl-L-methionine-binding positions include glycine 42–histidine 44, aspartate 62, phenylalanine 86, aspartate 107, and glutamine 114.

It belongs to the methyltransferase superfamily. RsmH family.

Its subcellular location is the cytoplasm. It carries out the reaction cytidine(1402) in 16S rRNA + S-adenosyl-L-methionine = N(4)-methylcytidine(1402) in 16S rRNA + S-adenosyl-L-homocysteine + H(+). Functionally, specifically methylates the N4 position of cytidine in position 1402 (C1402) of 16S rRNA. This chain is Ribosomal RNA small subunit methyltransferase H, found in Janthinobacterium sp. (strain Marseille) (Minibacterium massiliensis).